We begin with the raw amino-acid sequence, 230 residues long: Complex I assembly factor TMEM126B, mitochondrial (230 aa).

4 helical membrane passes run 70 to 92 (LNIH…ANLV), 107 to 126 (YASL…KLFV), 139 to 161 (SCVL…ALAF), and 196 to 218 (AMAI…HYNI).

It belongs to the TMEM126 family. Part of the mitochondrial complex I assembly/MCIA complex that comprises at least the core subunits TMEM126B, NDUFAF1, ECSIT and ACAD9 and complement subunits such as COA1 and TMEM186. Associates with the intermediate 370 kDa subcomplex of incompletely assembled complex I. Interacts with TMEM70.

It localises to the mitochondrion membrane. As part of the MCIA complex, involved in the assembly of the mitochondrial complex I. Participates in constructing the membrane arm of complex I. The polypeptide is Complex I assembly factor TMEM126B, mitochondrial (Mus musculus (Mouse)).